A 252-amino-acid polypeptide reads, in one-letter code: Type III pantothenate kinase (252 aa).

6–13 (DIGNTSTA) provides a ligand contact to ATP. 104 to 107 (GADR) contacts substrate. D106 acts as the Proton acceptor in catalysis. K(+) is bound at residue D128. T131 is a binding site for ATP. T183 is a binding site for substrate.

This sequence belongs to the type III pantothenate kinase family. As to quaternary structure, homodimer. The cofactor is NH4(+). It depends on K(+) as a cofactor.

The protein resides in the cytoplasm. The catalysed reaction is (R)-pantothenate + ATP = (R)-4'-phosphopantothenate + ADP + H(+). The protein operates within cofactor biosynthesis; coenzyme A biosynthesis; CoA from (R)-pantothenate: step 1/5. Catalyzes the phosphorylation of pantothenate (Pan), the first step in CoA biosynthesis. In Thermus thermophilus (strain ATCC 27634 / DSM 579 / HB8), this protein is Type III pantothenate kinase.